The sequence spans 3096 residues: Cilia- and flagella-associated protein 54 (3096 aa).

Over residues 1–45 (MAAQGSPSSSPSDDSTTSGSLPELPPTSTATSRSPPESKGSSRSS) the composition is skewed to low complexity. Disordered stretches follow at residues 1–46 (MAAQ…RSSL) and 1248–1267 (SNEQ…LKTK).

Belongs to the CFAP54 family.

Its subcellular location is the cytoplasm. The protein resides in the cytoskeleton. It is found in the cilium axoneme. Functionally, required for assembly and function of cilia and flagella. The protein is Cilia- and flagella-associated protein 54 of Homo sapiens (Human).